We begin with the raw amino-acid sequence, 112 residues long: UPF0212 protein Mhun_0078 (112 aa).

This sequence belongs to the UPF0212 family.

In Methanospirillum hungatei JF-1 (strain ATCC 27890 / DSM 864 / NBRC 100397 / JF-1), this protein is UPF0212 protein Mhun_0078.